The primary structure comprises 465 residues: Glutamate--tRNA ligase (465 aa).

Positions proline 11–asparagine 21 match the 'HIGH' region motif. Basic and acidic residues predominate over residues lysine 120 to proline 131. Positions lysine 120–proline 139 are disordered. Positions lysine 243–arginine 247 match the 'KMSKS' region motif. Lysine 246 is a binding site for ATP.

This sequence belongs to the class-I aminoacyl-tRNA synthetase family. Glutamate--tRNA ligase type 1 subfamily. Monomer.

The protein resides in the cytoplasm. It carries out the reaction tRNA(Glu) + L-glutamate + ATP = L-glutamyl-tRNA(Glu) + AMP + diphosphate. Its function is as follows. Catalyzes the attachment of glutamate to tRNA(Glu) in a two-step reaction: glutamate is first activated by ATP to form Glu-AMP and then transferred to the acceptor end of tRNA(Glu). The protein is Glutamate--tRNA ligase of Ralstonia nicotianae (strain ATCC BAA-1114 / GMI1000) (Ralstonia solanacearum).